The following is a 380-amino-acid chain: Protein GOLM2 (380 aa).

M1 is modified (N-acetylmethionine). Topologically, residues 1–14 are cytoplasmic; sequence MVGFGANRRAGRLP. The chain crosses the membrane as a helical; Signal-anchor for type II membrane protein span at residues 15–35; sequence SLVLAVLLVVIAVLAFNYWSI. The stretch at 35–195 forms a coiled coil; the sequence is ISSRHVLLQE…QFLQEQKQEA (161 aa). At 36–380 the chain is on the lumenal side; it reads SSRHVLLQEE…YGKQRFNDAL (345 aa). 2 stretches are compositionally biased toward basic and acidic residues: residues 192 to 212 and 227 to 247; these read KQEA…DNHA and KNEE…KRGG. A disordered region spans residues 192 to 254; it reads KQEAHKFESK…RGGDAGMPGI (63 aa). A phosphoserine mark is found at S233 and S275. Residues 280–380 are disordered; it reads ESHQVISHLP…YGKQRFNDAL (101 aa). Positions 305-321 are enriched in polar residues; it reads NHNGNSRTSKQNPSNPL. Basic and acidic residues predominate over residues 344 to 380; it reads ATKDRAGDFHKLKQNDEERELQMDPADYGKQRFNDAL.

It belongs to the GOLM family.

It localises to the membrane. The chain is Protein GOLM2 (GOLM2) from Bos taurus (Bovine).